Reading from the N-terminus, the 807-residue chain is Glycerol-3-phosphate acyltransferase (807 aa).

An HXXXXD motif motif is present at residues 308 to 313 (CHRSHM).

Belongs to the GPAT/DAPAT family.

Its subcellular location is the cell inner membrane. It carries out the reaction sn-glycerol 3-phosphate + an acyl-CoA = a 1-acyl-sn-glycero-3-phosphate + CoA. Its pathway is phospholipid metabolism; CDP-diacylglycerol biosynthesis; CDP-diacylglycerol from sn-glycerol 3-phosphate: step 1/3. The polypeptide is Glycerol-3-phosphate acyltransferase (Shewanella loihica (strain ATCC BAA-1088 / PV-4)).